The chain runs to 55 residues: Large ribosomal subunit protein bL33B (55 aa).

Belongs to the bacterial ribosomal protein bL33 family.

The protein is Large ribosomal subunit protein bL33B (rpmG2) of Mycobacterium tuberculosis (strain CDC 1551 / Oshkosh).